The primary structure comprises 49 residues: Photosystem II reaction center protein K (49 aa).

A propeptide spanning residues 1–12 (MISSIHLRKLLG) is cleaved from the precursor. A helical membrane pass occupies residues 24 to 44 (IIDVLPIIPVLFLLLAFVWQA).

This sequence belongs to the PsbK family. In terms of assembly, PSII is composed of 1 copy each of membrane proteins PsbA, PsbB, PsbC, PsbD, PsbE, PsbF, PsbH, PsbI, PsbJ, PsbK, PsbL, PsbM, PsbT, PsbX, PsbY, PsbZ, Psb30/Ycf12, at least 3 peripheral proteins of the oxygen-evolving complex and a large number of cofactors. It forms dimeric complexes.

The protein localises to the plastid. Its subcellular location is the chloroplast thylakoid membrane. One of the components of the core complex of photosystem II (PSII). PSII is a light-driven water:plastoquinone oxidoreductase that uses light energy to abstract electrons from H(2)O, generating O(2) and a proton gradient subsequently used for ATP formation. It consists of a core antenna complex that captures photons, and an electron transfer chain that converts photonic excitation into a charge separation. In Phacus acuminatus, this protein is Photosystem II reaction center protein K.